A 167-amino-acid polypeptide reads, in one-letter code: Small ribosomal subunit protein uS5 (167 aa).

The S5 DRBM domain occupies 12–75 (LQEKLIAVNR…EKARRNIVTV (64 aa)).

The protein belongs to the universal ribosomal protein uS5 family. Part of the 30S ribosomal subunit. Contacts proteins S4 and S8.

With S4 and S12 plays an important role in translational accuracy. In terms of biological role, located at the back of the 30S subunit body where it stabilizes the conformation of the head with respect to the body. This Shewanella baltica (strain OS223) protein is Small ribosomal subunit protein uS5.